Reading from the N-terminus, the 280-residue chain is 4-diphosphocytidyl-2-C-methyl-D-erythritol kinase (280 aa).

Residue Lys-8 is part of the active site. 91–101 (PVAAGLAGGST) is a binding site for ATP. Residue Asp-133 is part of the active site.

This sequence belongs to the GHMP kinase family. IspE subfamily.

It catalyses the reaction 4-CDP-2-C-methyl-D-erythritol + ATP = 4-CDP-2-C-methyl-D-erythritol 2-phosphate + ADP + H(+). It participates in isoprenoid biosynthesis; isopentenyl diphosphate biosynthesis via DXP pathway; isopentenyl diphosphate from 1-deoxy-D-xylulose 5-phosphate: step 3/6. In terms of biological role, catalyzes the phosphorylation of the position 2 hydroxy group of 4-diphosphocytidyl-2C-methyl-D-erythritol. This chain is 4-diphosphocytidyl-2-C-methyl-D-erythritol kinase, found in Clostridium botulinum (strain Okra / Type B1).